Reading from the N-terminus, the 407-residue chain is MHVDTLWSNVHLITLDGEGLGVIRDGVLACADGRIVHVGPAGSDANLRPTTRIDGEGRWMSPGLIDCHTHLVYAGNRANEFEQRLQGISYAEIARAGGGIVSTVRATRAATPEQLASESRPRLLAMRAEGVTTLEIKSGYGLTLPDERKQLQVARALGEGCRVNVVTTFLGAHAIPPGREAQEYTDEVCNVMIPAIAAEGLAEAVDVFCENIAFSPAQARQVFEAARAHGLAIKIHAEQLSNQHGAELAASFGALSADHIEHLDDAGIAAMAAAGTVAVLLPGAFYFTRDTTLPPIAALRAAGVPLALATDSNPGTSPLTSPLLAMNMGATLFRLTVDECIAGFTREAARALGRGDRIGRLAIGMDCDLAIWDIDAPADLVYRIGFNPLHARVVRGQPDLPASWSNT.

His-68 and His-70 together coordinate Fe(3+). Positions 68 and 70 each coordinate Zn(2+). 4-imidazolone-5-propanoate is bound by residues Arg-77, Tyr-140, and His-173. Tyr-140 contacts N-formimidoyl-L-glutamate. His-236 provides a ligand contact to Fe(3+). His-236 contributes to the Zn(2+) binding site. Gln-239 contributes to the 4-imidazolone-5-propanoate binding site. Fe(3+) is bound at residue Asp-311. Zn(2+) is bound at residue Asp-311. N-formimidoyl-L-glutamate-binding residues include Asn-313 and Gly-315. Thr-316 contacts 4-imidazolone-5-propanoate.

This sequence belongs to the metallo-dependent hydrolases superfamily. HutI family. The cofactor is Zn(2+). Requires Fe(3+) as cofactor.

The protein localises to the cytoplasm. It catalyses the reaction 4-imidazolone-5-propanoate + H2O = N-formimidoyl-L-glutamate. Its pathway is amino-acid degradation; L-histidine degradation into L-glutamate; N-formimidoyl-L-glutamate from L-histidine: step 3/3. In terms of biological role, catalyzes the hydrolytic cleavage of the carbon-nitrogen bond in imidazolone-5-propanoate to yield N-formimidoyl-L-glutamate. It is the third step in the universal histidine degradation pathway. This Stenotrophomonas maltophilia (strain R551-3) protein is Imidazolonepropionase.